The sequence spans 199 residues: MAAKRRVSAAKDKWKLKQWYVIYAPDFFGGVEVGLTPADDPEKVLNRVVEVTLKDITGDFLKGHVKLYFQVYDVKGQNAYTKFKGMKLARSYIRSLVRRRTTRIDGIFNITTKDGYKLRVMAMVIAARRIQTSQERAIRKIMQEIIYKKAEELNFKDFVLEAVNGKIAAEIAKEAKKIYPLKKAEIRKIKVLGEPEVAA.

The protein belongs to the eukaryotic ribosomal protein eS1 family.

The chain is Small ribosomal subunit protein eS1 from Pyrococcus abyssi (strain GE5 / Orsay).